We begin with the raw amino-acid sequence, 232 residues long: MATPGRPWAQARSAYRASEVLRRVTGRRRDPGPQSNGPGQEDARAPGRLARLLGQLRAEAASRSEVPRLLKLVERAGAGAAGAGERTGAHSRGSVCSVCGEPRGRATYPAGVLEVSERRLQEGLAAVREELGAEIEALRAELRAELDALRALLPPPPPSPPARREPRAVPRATPRGPTLLRTLGTVSALVAASRPADDAPDGPAECGAHRAPVRKNHKKMPVPPGAPQGGGD.

Disordered regions lie at residues 1 to 47, 153 to 178, and 191 to 232; these read MATP…RAPG, LPPP…RGPT, and AASR…GGGD. Basic and acidic residues predominate over residues 19–31; sequence EVLRRVTGRRRDP. Positions 211–220 are enriched in basic residues; that stretch reads APVRKNHKKM.

It belongs to the FAM246 family.

This Homo sapiens (Human) protein is Protein FAM246A.